The primary structure comprises 147 residues: MYPAHLLVLSAVCVSLLGAANIPPYPLNLINFMEMIRYTIPCDKTWGHYADYGCYCGAGGSGTPVDALDRCCYVHDNCYGVAENKHKCNPKTQSCSYKLTKRTIICYGAAGTCGRIVCDCDRTAALCFGDSEYIGAHKNIDTKRHCQ.

The first 19 residues, 1–19, serve as a signal peptide directing secretion; sequence MYPAHLLVLSAVCVSLLGA. The propeptide occupies 20–27; the sequence is ANIPPYPL. Intrachain disulfides connect cysteine 54/cysteine 146, cysteine 56/cysteine 72, cysteine 71/cysteine 127, cysteine 78/cysteine 120, cysteine 88/cysteine 113, and cysteine 106/cysteine 118. The Ca(2+) site is built by tyrosine 55, glycine 57, and glycine 59. Residue histidine 75 is part of the active site. Residue aspartate 76 participates in Ca(2+) binding. The active site involves aspartate 121.

This sequence belongs to the phospholipase A2 family. Group I subfamily. D49 sub-subfamily. In terms of assembly, heterodimer; disulfide-linked. The A chains have phospholipase A2 activity and the B chains show homology with the basic protease inhibitors. Ca(2+) is required as a cofactor. Expressed by the venom gland.

The protein resides in the secreted. It carries out the reaction a 1,2-diacyl-sn-glycero-3-phosphocholine + H2O = a 1-acyl-sn-glycero-3-phosphocholine + a fatty acid + H(+). Functionally, snake venom phospholipase A2 (PLA2) that inhibits neuromuscular transmission by blocking acetylcholine release from the nerve termini. PLA2 catalyzes the calcium-dependent hydrolysis of the 2-acyl groups in 3-sn-phosphoglycerides. In Bungarus caeruleus (Indian krait), this protein is Basic phospholipase A2 beta-bungarotoxin A2 chain.